The sequence spans 434 residues: Adenylosuccinate synthetase (434 aa).

Residues 22–28 (GDEGKGK) and 50–52 (GHT) each bind GTP. Asp23 acts as the Proton acceptor in catalysis. Positions 23 and 50 each coordinate Mg(2+). Residues 23–26 (DEGK), 48–51 (NAGH), Thr139, Arg153, Gln234, Thr249, and Arg313 each bind IMP. The active-site Proton donor is His51. 309–315 (ATTGRKR) lines the substrate pocket. Residues Arg315, 341–343 (KLD), and 423–425 (SVG) each bind GTP.

The protein belongs to the adenylosuccinate synthetase family. As to quaternary structure, homodimer. It depends on Mg(2+) as a cofactor.

Its subcellular location is the cytoplasm. It carries out the reaction IMP + L-aspartate + GTP = N(6)-(1,2-dicarboxyethyl)-AMP + GDP + phosphate + 2 H(+). The protein operates within purine metabolism; AMP biosynthesis via de novo pathway; AMP from IMP: step 1/2. In terms of biological role, plays an important role in the de novo pathway of purine nucleotide biosynthesis. Catalyzes the first committed step in the biosynthesis of AMP from IMP. The sequence is that of Adenylosuccinate synthetase from Chlorobium limicola (strain DSM 245 / NBRC 103803 / 6330).